Consider the following 506-residue polypeptide: Histidine--tRNA ligase (506 aa).

This sequence belongs to the class-II aminoacyl-tRNA synthetase family. As to quaternary structure, homodimer.

The protein resides in the cytoplasm. The enzyme catalyses tRNA(His) + L-histidine + ATP = L-histidyl-tRNA(His) + AMP + diphosphate + H(+). The protein is Histidine--tRNA ligase (hisS) of Bradyrhizobium diazoefficiens (strain JCM 10833 / BCRC 13528 / IAM 13628 / NBRC 14792 / USDA 110).